Here is a 155-residue protein sequence, read N- to C-terminus: Small ribosomal subunit protein uS7 (155 aa).

The protein belongs to the universal ribosomal protein uS7 family. In terms of assembly, part of the 30S ribosomal subunit. Contacts proteins S9 and S11.

Functionally, one of the primary rRNA binding proteins, it binds directly to 16S rRNA where it nucleates assembly of the head domain of the 30S subunit. Is located at the subunit interface close to the decoding center, probably blocks exit of the E-site tRNA. The sequence is that of Small ribosomal subunit protein uS7 from Cytophaga hutchinsonii (strain ATCC 33406 / DSM 1761 / CIP 103989 / NBRC 15051 / NCIMB 9469 / D465).